The chain runs to 694 residues: uncharacterized protein (694 aa).

The stretch at His15 to Lys51 forms a coiled coil. Disordered regions lie at residues Leu259–Tyr286, Gln461–Asp490, and Asn643–Thr680. 2 stretches are compositionally biased toward polar residues: residues Ser272–Glu283 and Asp476–Asp490. Over residues Ser663 to Arg677 the composition is skewed to low complexity.

This is an uncharacterized protein from Homo sapiens (Human).